A 522-amino-acid polypeptide reads, in one-letter code: Putative glucosylceramidase 3 (522 aa).

A signal peptide spans 1–21 (MSRWKVVILCLLSFMFEIGHA). The Proton donor role is filled by glutamate 259. The active-site Nucleophile is the glutamate 364.

Belongs to the glycosyl hydrolase 30 family.

The catalysed reaction is a beta-D-glucosylceramide + H2O = an N-acyl-sphingoid base + D-glucose. It carries out the reaction a beta-D-glucosyl-(1&lt;-&gt;1')-N-acylsphing-4-enine + H2O = an N-acylsphing-4-enine + D-glucose. It catalyses the reaction an N-acyl-1-beta-D-glucosyl-15-methylhexadecasphing-4-enine + H2O = an N-acyl-15-methylhexadecasphing-4-enine + D-glucose. Its pathway is lipid metabolism; sphingolipid metabolism. Its function is as follows. Glucosylceramidase that catalyzes the hydrolysis of glucosylceramides into free ceramides and glucose. C.elegans contain specific sphingoid bases, which are unique or different in structure compared to the sphingoid bases found in other animals. Two examples of these distinctive compounds are: 15-methylhexadecasphinganine and 15-methylhexadecasphing-4-enine. The protein is Putative glucosylceramidase 3 of Caenorhabditis elegans.